Reading from the N-terminus, the 400-residue chain is Phosphoglycerate kinase (400 aa).

Residues 24 to 26, R40, 63 to 66, R121, and R154 each bind substrate; these read DFN and HFGR. Residues K205, G296, E327, and 356 to 359 each bind ATP; that span reads GGDS.

Belongs to the phosphoglycerate kinase family. As to quaternary structure, monomer.

The protein resides in the cytoplasm. It carries out the reaction (2R)-3-phosphoglycerate + ATP = (2R)-3-phospho-glyceroyl phosphate + ADP. Its pathway is carbohydrate degradation; glycolysis; pyruvate from D-glyceraldehyde 3-phosphate: step 2/5. The chain is Phosphoglycerate kinase from Thermosynechococcus vestitus (strain NIES-2133 / IAM M-273 / BP-1).